The sequence spans 504 residues: Putative glycerol-3-phosphate transporter 2 (504 aa).

Helical transmembrane passes span 31 to 51, 84 to 104, 116 to 136, 145 to 165, 178 to 198, 210 to 230, 280 to 302, 324 to 344, 352 to 372, 378 to 398, 424 to 444, and 452 to 472; these read LSFK…YIAF, ALLG…MFVA, FLTI…VAFW, FLAV…CIVA, MIMG…SLIA, FLGP…FLPV, IPGV…TFLY, GNLS…AGYI, AITA…YRVF, TINV…FALI, AIID…TGYI, and VFYM…KLII.

The protein belongs to the major facilitator superfamily. Organophosphate:Pi antiporter (OPA) (TC 2.A.1.4) family. In terms of tissue distribution, expressed in the root-hair differentiation zone.

The protein resides in the membrane. The sequence is that of Putative glycerol-3-phosphate transporter 2 from Arabidopsis thaliana (Mouse-ear cress).